Consider the following 130-residue polypeptide: MAENQYYGTGRRKSSAARVFIKPGSGNIVINQRSLEQYFGRETARMVVRQPLELTDMVGKFDLYITVKGGGISGQAGAIRHGITRALMEYDETLRGELRKAGFVTRDARQVERKKVGLRKARRRPQFSKR.

The protein belongs to the universal ribosomal protein uS9 family.

In Serratia proteamaculans (strain 568), this protein is Small ribosomal subunit protein uS9.